Reading from the N-terminus, the 794-residue chain is Interphotoreceptor matrix proteoglycan 1 (794 aa).

The first 20 residues, Met1–Gly20, serve as a signal peptide directing secretion. Residues Met202–Pro213 show a composition bias toward polar residues. 3 disordered regions span residues Met202–Thr221, Lys314–Thr355, and Ser413–Ser449. Positions Leu236–Ser357 constitute an SEA 1 domain. Basic and acidic residues predominate over residues Asn332 to Glu351. Residues Thr425 and Thr439 are each glycosylated (O-linked (GalNAc...) threonine). O-linked (GalNAc...) serine glycosylation occurs at Ser443. Thr448 and Thr450 each carry an O-linked (GalNAc...) threonine glycan. One can recognise an SEA 2 domain in the interval Arg579–Gln692. Asn624 carries an N-linked (GlcNAc...) asparagine glycan. A Heparin- and hyaluronan-binding motif is present at residues Lys629–Arg637. N-linked (GlcNAc...) asparagine glycosylation is present at Asn656.

Post-translationally, highly glycosylated (N- and O-linked carbohydrates and sialic acid).

The protein resides in the cell projection. The protein localises to the cilium. It is found in the photoreceptor outer segment. It localises to the secreted. Its subcellular location is the extracellular space. The protein resides in the extracellular matrix. The protein localises to the interphotoreceptor matrix. It is found in the photoreceptor inner segment. Functionally, chondroitin sulfate-, heparin- and hyaluronan-binding protein. May serve to form a basic macromolecular scaffold comprising the insoluble interphotoreceptor matrix. The polypeptide is Interphotoreceptor matrix proteoglycan 1 (IMPG1) (Bos taurus (Bovine)).